Consider the following 180-residue polypeptide: Protein GrpE (180 aa).

A disordered region spans residues 1–21; the sequence is MSEEVKEQNLPEVEPVQEAAS.

It belongs to the GrpE family. In terms of assembly, homodimer.

Its subcellular location is the cytoplasm. Functionally, participates actively in the response to hyperosmotic and heat shock by preventing the aggregation of stress-denatured proteins, in association with DnaK and GrpE. It is the nucleotide exchange factor for DnaK and may function as a thermosensor. Unfolded proteins bind initially to DnaJ; upon interaction with the DnaJ-bound protein, DnaK hydrolyzes its bound ATP, resulting in the formation of a stable complex. GrpE releases ADP from DnaK; ATP binding to DnaK triggers the release of the substrate protein, thus completing the reaction cycle. Several rounds of ATP-dependent interactions between DnaJ, DnaK and GrpE are required for fully efficient folding. In Campylobacter concisus (strain 13826), this protein is Protein GrpE.